A 424-amino-acid chain; its full sequence is MAKIVVTGGQALHGEVHISGAKNAVLPILCATLLADAPVEISNVPHLHDVITTVKLLSELGAEVTIDEGTLAKGRSILVDPRSVTHQIAPYELVKTMRASILVLGPLLARYGTAEVSLPGGCAIGSRPVDQHIKGLQALGADISVENGYIKATSNGRLKGGRYVFDMVSVTGTENVLMAAVLAEGTTVLENAAMEPEVTDLADCLIALGAQIEGAGTPRITVQGVERLGGGHHAVLPDRIETGTFLVAAAMTGGSVTVRRARPDTLDAVLDKLTEAGATITTTAESVTLDMHGKRPRAVNLTTAPYPAFPTDMQAQFMALNCVAEGVGVINETIFENRFMHVNELLRLGADIQVEGHTAIVRGAERLSGAPVMATDLRASASLILAGLVADGDTTIDRIYHLDRGYENIEEKLGALGATIRRIA.

Phosphoenolpyruvate is bound at residue 22-23 (KN). Arg-98 lines the UDP-N-acetyl-alpha-D-glucosamine pocket. Cys-122 (proton donor) is an active-site residue. Cys-122 carries the post-translational modification 2-(S-cysteinyl)pyruvic acid O-phosphothioketal. UDP-N-acetyl-alpha-D-glucosamine-binding positions include 127-131 (RPVDQ), Asp-312, and Ile-334.

Belongs to the EPSP synthase family. MurA subfamily.

It is found in the cytoplasm. It catalyses the reaction phosphoenolpyruvate + UDP-N-acetyl-alpha-D-glucosamine = UDP-N-acetyl-3-O-(1-carboxyvinyl)-alpha-D-glucosamine + phosphate. Its pathway is cell wall biogenesis; peptidoglycan biosynthesis. Cell wall formation. Adds enolpyruvyl to UDP-N-acetylglucosamine. The sequence is that of UDP-N-acetylglucosamine 1-carboxyvinyltransferase from Xanthomonas campestris pv. campestris (strain B100).